A 465-amino-acid polypeptide reads, in one-letter code: Glutamate--tRNA ligase (465 aa).

Residues 8–18 carry the 'HIGH' region motif; that stretch reads PSPTGHLHIGG. Positions 97, 99, 124, and 126 each coordinate Zn(2+). Positions 234-238 match the 'KMSKS' region motif; that stretch reads RLSKR. K237 is an ATP binding site.

This sequence belongs to the class-I aminoacyl-tRNA synthetase family. Glutamate--tRNA ligase type 1 subfamily. Monomer. Requires Zn(2+) as cofactor.

It is found in the cytoplasm. It carries out the reaction tRNA(Glu) + L-glutamate + ATP = L-glutamyl-tRNA(Glu) + AMP + diphosphate. Functionally, catalyzes the attachment of glutamate to tRNA(Glu) in a two-step reaction: glutamate is first activated by ATP to form Glu-AMP and then transferred to the acceptor end of tRNA(Glu). This Thermodesulfovibrio yellowstonii (strain ATCC 51303 / DSM 11347 / YP87) protein is Glutamate--tRNA ligase.